Consider the following 250-residue polypeptide: 3-deoxy-manno-octulosonate cytidylyltransferase (250 aa).

The protein belongs to the KdsB family.

It localises to the cytoplasm. The catalysed reaction is 3-deoxy-alpha-D-manno-oct-2-ulosonate + CTP = CMP-3-deoxy-beta-D-manno-octulosonate + diphosphate. The protein operates within nucleotide-sugar biosynthesis; CMP-3-deoxy-D-manno-octulosonate biosynthesis; CMP-3-deoxy-D-manno-octulosonate from 3-deoxy-D-manno-octulosonate and CTP: step 1/1. It participates in bacterial outer membrane biogenesis; lipopolysaccharide biosynthesis. Activates KDO (a required 8-carbon sugar) for incorporation into bacterial lipopolysaccharide in Gram-negative bacteria. This chain is 3-deoxy-manno-octulosonate cytidylyltransferase, found in Legionella pneumophila (strain Corby).